Consider the following 411-residue polypeptide: Copper resistance protein CRF1 (411 aa).

Residues 1-40 (MVVIEGIKYACERCIRGHRVSSCTHTQQPLIRIKPKGRPA) constitute a DNA-binding region (copper-fist). The Zn(2+) site is built by C11, C14, C23, and H25. Low complexity-rich tracts occupy residues 115-190 (QQQA…PHSP), 205-214 (SSSSLSSLHS), 227-241 (SHNSLSAASQLANSP), and 350-370 (SVAANPSASASASSIQTPPSS). Disordered stretches follow at residues 115 to 241 (QQQA…ANSP) and 348 to 389 (EMSV…VSPA).

The protein localises to the nucleus. Its function is as follows. Transcriptional regulator involved in resistance to high copper concentration. The polypeptide is Copper resistance protein CRF1 (CRF1) (Yarrowia lipolytica (strain CLIB 122 / E 150) (Yeast)).